A 169-amino-acid polypeptide reads, in one-letter code: Crossover junction endodeoxyribonuclease RuvC (169 aa).

Residues aspartate 11, glutamate 71, and aspartate 143 contribute to the active site. Mg(2+)-binding residues include aspartate 11, glutamate 71, and aspartate 143.

The protein belongs to the RuvC family. As to quaternary structure, homodimer which binds Holliday junction (HJ) DNA. The HJ becomes 2-fold symmetrical on binding to RuvC with unstacked arms; it has a different conformation from HJ DNA in complex with RuvA. In the full resolvosome a probable DNA-RuvA(4)-RuvB(12)-RuvC(2) complex forms which resolves the HJ. Mg(2+) is required as a cofactor.

The protein localises to the cytoplasm. The enzyme catalyses Endonucleolytic cleavage at a junction such as a reciprocal single-stranded crossover between two homologous DNA duplexes (Holliday junction).. Its function is as follows. The RuvA-RuvB-RuvC complex processes Holliday junction (HJ) DNA during genetic recombination and DNA repair. Endonuclease that resolves HJ intermediates. Cleaves cruciform DNA by making single-stranded nicks across the HJ at symmetrical positions within the homologous arms, yielding a 5'-phosphate and a 3'-hydroxyl group; requires a central core of homology in the junction. The consensus cleavage sequence is 5'-(A/T)TT(C/G)-3'. Cleavage occurs on the 3'-side of the TT dinucleotide at the point of strand exchange. HJ branch migration catalyzed by RuvA-RuvB allows RuvC to scan DNA until it finds its consensus sequence, where it cleaves and resolves the cruciform DNA. This chain is Crossover junction endodeoxyribonuclease RuvC, found in Rhizobium etli (strain CIAT 652).